A 37-amino-acid chain; its full sequence is Large ribosomal subunit protein bL36 (37 aa).

Belongs to the bacterial ribosomal protein bL36 family.

In Synechococcus sp. (strain RCC307), this protein is Large ribosomal subunit protein bL36.